The following is a 121-amino-acid chain: MARIAGVDIPRDKRVVISLTYIYGIGKSTAKKILAEAGVSEDTRVRDLTEEELGRIREIVGRLKVEGDLRREVSLNIKRLIEIGCYRGIRHRRGLPVRGQNTKNNARTRKGPRRTVANKKK.

Residues 94-121 (GLPVRGQNTKNNARTRKGPRRTVANKKK) form a disordered region. Basic residues predominate over residues 106–121 (ARTRKGPRRTVANKKK).

The protein belongs to the universal ribosomal protein uS13 family. In terms of assembly, part of the 30S ribosomal subunit. Forms a loose heterodimer with protein S19. Forms two bridges to the 50S subunit in the 70S ribosome.

Functionally, located at the top of the head of the 30S subunit, it contacts several helices of the 16S rRNA. In the 70S ribosome it contacts the 23S rRNA (bridge B1a) and protein L5 of the 50S subunit (bridge B1b), connecting the 2 subunits; these bridges are implicated in subunit movement. Contacts the tRNAs in the A and P-sites. This chain is Small ribosomal subunit protein uS13, found in Geobacillus sp. (strain WCH70).